The primary structure comprises 1222 residues: Chitin synthase 4 (1222 aa).

Positions Met1–Tyr108 are disordered. The span at Leu51 to Val68 shows a compositional bias: polar residues. An N-linked (GlcNAc...) asparagine glycan is attached at Asn64. Residues Ile94–Asn107 are compositionally biased toward basic and acidic residues. Asn116 carries an N-linked (GlcNAc...) asparagine glycan. The interval Thr136–Gln199 is disordered. Polar residues predominate over residues Thr137–Ser154. Residues Ser176–Ser196 are compositionally biased toward basic residues. 2 consecutive transmembrane segments (helical) span residues Pro204 to Leu224 and Met242 to Phe262. N-linked (GlcNAc...) asparagine glycans are attached at residues Asn378 and Asn418. The chain crosses the membrane as a helical span at residues Tyr509–Phe529. Residues Arg595–Gly662 form a disordered region. Residues Asn608–Leu643 are compositionally biased toward polar residues. N-linked (GlcNAc...) asparagine glycosylation is found at Asn636 and Asn1031. The next 3 membrane-spanning stretches (helical) occupy residues Phe1056–Phe1076, Val1090–Thr1110, and Tyr1116–Val1136. A disordered region spans residues Gly1201–Ala1222. Residues Gln1213–Ala1222 are compositionally biased toward basic and acidic residues.

This sequence belongs to the chitin synthase family. Class IV subfamily.

It localises to the cell membrane. It carries out the reaction [(1-&gt;4)-N-acetyl-beta-D-glucosaminyl](n) + UDP-N-acetyl-alpha-D-glucosamine = [(1-&gt;4)-N-acetyl-beta-D-glucosaminyl](n+1) + UDP + H(+). Functionally, polymerizes chitin, a structural polymer of the cell wall and septum, by transferring the sugar moiety of UDP-GlcNAc to the non-reducing end of the growing chitin polymer. Plays a role in cell wall integrity and is involved in tolerance to hyperosmotic conditions. Required to successfully penetrate the host plants and thus plays a key role in pathogenicity. This Verticillium dahliae (strain VdLs.17 / ATCC MYA-4575 / FGSC 10137) (Verticillium wilt) protein is Chitin synthase 4.